A 160-amino-acid polypeptide reads, in one-letter code: S-protein homolog 13 (160 aa).

A signal peptide spans 1-27; the sequence is MGRDLGWCFFVATVLLAAVLLPAPTIA.

Belongs to the plant self-incompatibility (S1) protein family.

The protein localises to the secreted. This Arabidopsis thaliana (Mouse-ear cress) protein is S-protein homolog 13.